The following is a 798-amino-acid chain: Protocadherin beta-13 (798 aa).

The N-terminal stretch at 1–28 is a signal peptide; the sequence is MEASGKLICRQRQVLFSFLLLGLSLAGA. The Extracellular portion of the chain corresponds to 29–690; it reads AEPRSYSVVE…AQADLLTVYL (662 aa). Cadherin domains lie at 36–134, 139–243, 248–348, 353–451, and 456–561; these read VVEE…SPVF, MLVK…APEF, YRVQ…APEV, FTSP…APAF, and YTLF…SPFV. N-linked (GlcNAc...) asparagine glycosylation is found at asparagine 418 and asparagine 436. Residue asparagine 567 is glycosylated (N-linked (GlcNAc...) asparagine). Residues 568 to 671 form the Cadherin 6 domain; it reads GSAPCTELVP…LVDGFSQPYL (104 aa). The helical transmembrane segment at 691 to 711 threads the bilayer; that stretch reads VVALASVSSLFLFSVLLFVAV. Topologically, residues 712-798 are cytoplasmic; sequence RLCRRSRAAS…FPNNFGFNIQ (87 aa).

The protein resides in the cell membrane. In terms of biological role, potential calcium-dependent cell-adhesion protein. May be involved in the establishment and maintenance of specific neuronal connections in the brain. This chain is Protocadherin beta-13 (PCDHB13), found in Homo sapiens (Human).